The primary structure comprises 167 residues: MRIATSYEMCAQCCCAAAKFADTLQTKPRRSHVTPIYTIAAISLGASLGALARYGLGLALNAIFPPLPIGTLAANLIAAYVVGVTIAYVGTVPGLSPLWRLFMITGLAGGLSTFSTFTAELFSLLREGRLGMSAGMLGLHVGGSLALLMLGMLTIGLLRKSSLGIAE.

4 helical membrane-spanning segments follow: residues 32–52 (HVTPIYTIAAISLGASLGALA), 69–89 (IGTLAANLIAAYVVGVTIAYV), 102–122 (FMITGLAGGLSTFSTFTAELF), and 137–157 (LGLHVGGSLALLMLGMLTIGL). Positions 109 and 112 each coordinate Na(+).

The protein belongs to the fluoride channel Fluc/FEX (TC 1.A.43) family.

It is found in the cell inner membrane. It catalyses the reaction fluoride(in) = fluoride(out). With respect to regulation, na(+) is not transported, but it plays an essential structural role and its presence is essential for fluoride channel function. In terms of biological role, fluoride-specific ion channel. Important for reducing fluoride concentration in the cell, thus reducing its toxicity. The chain is Fluoride-specific ion channel FluC from Xanthomonas oryzae pv. oryzae (strain KACC10331 / KXO85).